The chain runs to 454 residues: Flagellum-specific ATP synthase (454 aa).

An ATP-binding site is contributed by 182–189 (ASSGLGKS).

This sequence belongs to the ATPase alpha/beta chains family.

Its subcellular location is the cytoplasm. The catalysed reaction is ATP + H2O + 4 H(+)(in) = ADP + phosphate + 5 H(+)(out). In terms of biological role, probable catalytic subunit of a protein translocase for flagellum-specific export, or a proton translocase involved in local circuits at the flagellum. May be involved in a specialized protein export pathway that proceeds without signal peptide cleavage. In Buchnera aphidicola subsp. Baizongia pistaciae (strain Bp), this protein is Flagellum-specific ATP synthase (fliI).